A 31-amino-acid chain; its full sequence is Toxin BmKK12 (31 aa).

A Pyrrolidone carboxylic acid modification is found at Q1. Disulfide bonds link C4-C20, C10-C25, and C14-C27. A Proline amide modification is found at P31.

The protein belongs to the short scorpion toxin superfamily. Potassium channel inhibitor family. Alpha-KTx 17 subfamily. In terms of processing, the N-terminus is blocked. In terms of tissue distribution, expressed by the venom gland.

It localises to the secreted. Its function is as follows. Blocker of potassium channels (Kv). This chain is Toxin BmKK12, found in Olivierus martensii (Manchurian scorpion).